The following is a 149-amino-acid chain: Calmodulin (149 aa).

The residue at position 2 (alanine 2) is an N-acetylalanine. EF-hand domains lie at glutamate 8–asparagine 43, proline 44–aspartate 79, aspartate 81–lysine 116, and leucine 117–lysine 149. Residues aspartate 21, aspartate 23, aspartate 25, glutamine 27, glutamate 32, aspartate 57, aspartate 59, asparagine 61, threonine 63, glutamate 68, aspartate 94, aspartate 96, asparagine 98, glutamate 105, aspartate 130, aspartate 132, aspartate 134, arginine 136, and glutamate 141 each coordinate Ca(2+).

This sequence belongs to the calmodulin family.

Calmodulin mediates the control of a large number of enzymes, ion channels and other proteins by Ca(2+). Among the enzymes to be stimulated by the calmodulin-Ca(2+) complex are a number of protein kinases and phosphatases. This Colletotrichum gloeosporioides (Anthracnose fungus) protein is Calmodulin.